The chain runs to 108 residues: Thioredoxin (108 aa).

The Thioredoxin domain occupies 2-108 (SEHIVNVTDA…QLAAFLDANI (107 aa)). Cys33 and Cys36 are oxidised to a cystine.

Belongs to the thioredoxin family.

Functionally, participates in various redox reactions through the reversible oxidation of its active center dithiol to a disulfide and catalyzes dithiol-disulfide exchange reactions. In Pseudomonas aeruginosa (strain ATCC 15692 / DSM 22644 / CIP 104116 / JCM 14847 / LMG 12228 / 1C / PRS 101 / PAO1), this protein is Thioredoxin (trxA).